The chain runs to 358 residues: DNA integrity scanning protein DisA (358 aa).

The DAC domain occupies arginine 6–serine 144. ATP contacts are provided by residues glycine 73, leucine 91, and threonine 104 to serine 108.

It belongs to the DisA family. In terms of assembly, homooctamer. Mg(2+) is required as a cofactor.

It catalyses the reaction 2 ATP = 3',3'-c-di-AMP + 2 diphosphate. Its function is as follows. Participates in a DNA-damage check-point. DisA forms globular foci that rapidly scan along the chromosomes searching for lesions. Functionally, also has diadenylate cyclase activity, catalyzing the condensation of 2 ATP molecules into cyclic di-AMP (c-di-AMP). c-di-AMP likely acts as a signaling molecule that may couple DNA integrity with a cellular process. This Mycobacterium tuberculosis (strain ATCC 25177 / H37Ra) protein is DNA integrity scanning protein DisA.